An 87-amino-acid chain; its full sequence is Phosphoribosyl-ATP pyrophosphatase (87 aa).

This sequence belongs to the PRA-PH family.

The protein resides in the cytoplasm. It catalyses the reaction 1-(5-phospho-beta-D-ribosyl)-ATP + H2O = 1-(5-phospho-beta-D-ribosyl)-5'-AMP + diphosphate + H(+). It participates in amino-acid biosynthesis; L-histidine biosynthesis; L-histidine from 5-phospho-alpha-D-ribose 1-diphosphate: step 2/9. This is Phosphoribosyl-ATP pyrophosphatase from Beutenbergia cavernae (strain ATCC BAA-8 / DSM 12333 / CCUG 43141 / JCM 11478 / NBRC 16432 / NCIMB 13614 / HKI 0122).